Reading from the N-terminus, the 384-residue chain is Guanine nucleotide-binding protein alpha-1 subunit (384 aa).

Positions 1 to 22 (MGSLCSRNKHYSQADDEENTQT) are disordered. The N-myristoyl glycine moiety is linked to residue Gly-2. Cys-5 carries S-palmitoyl cysteine lipidation. Residues 38-384 (HIQKLLLLGA…RRNLFEAGLL (347 aa)) form the G-alpha domain. Residues 41 to 54 (KLLLLGAGDSGKST) are G1 motif. 14 residues coordinate GTP: Asp-49, Ser-50, Gly-51, Lys-52, Ser-53, Thr-54, Asp-163, Leu-188, Thr-194, Gly-222, Asn-288, Lys-289, Asp-291, and Ala-356. Ser-53 serves as a coordination point for Mg(2+). The G2 motif stretch occupies residues 186–194 (DVLFARIRT). Thr-194 lines the Mg(2+) pocket. The tract at residues 215–224 (YRLFDVGGQR) is G3 motif. The G4 motif stretch occupies residues 284–291 (MLFLNKFD). The tract at residues 354–359 (TTALDQ) is G5 motif.

The protein belongs to the G-alpha family. In terms of assembly, g proteins are composed of 3 units; alpha, beta and gamma. The alpha chain contains the guanine nucleotide binding site. Mg(2+) is required as a cofactor.

In terms of biological role, guanine nucleotide-binding proteins (G proteins) are involved as modulators or transducers in various transmembrane signaling systems. The protein is Guanine nucleotide-binding protein alpha-1 subunit (GPA1) of Solanum lycopersicum (Tomato).